The sequence spans 178 residues: Large ribosomal subunit protein uL6 (178 aa).

The protein belongs to the universal ribosomal protein uL6 family. In terms of assembly, part of the 50S ribosomal subunit.

In terms of biological role, this protein binds to the 23S rRNA, and is important in its secondary structure. It is located near the subunit interface in the base of the L7/L12 stalk, and near the tRNA binding site of the peptidyltransferase center. In Bacillus licheniformis (strain ATCC 14580 / DSM 13 / JCM 2505 / CCUG 7422 / NBRC 12200 / NCIMB 9375 / NCTC 10341 / NRRL NRS-1264 / Gibson 46), this protein is Large ribosomal subunit protein uL6.